The sequence spans 255 residues: uncharacterized protein (255 aa).

This is an uncharacterized protein from Pseudomonas chlororaphis (Pseudomonas aureofaciens).